Here is a 156-residue protein sequence, read N- to C-terminus: Small ribosomal subunit protein uS7 (156 aa).

This sequence belongs to the universal ribosomal protein uS7 family. In terms of assembly, part of the 30S ribosomal subunit. Contacts proteins S9 and S11.

In terms of biological role, one of the primary rRNA binding proteins, it binds directly to 16S rRNA where it nucleates assembly of the head domain of the 30S subunit. Is located at the subunit interface close to the decoding center, probably blocks exit of the E-site tRNA. In Shewanella sp. (strain MR-7), this protein is Small ribosomal subunit protein uS7.